A 220-amino-acid polypeptide reads, in one-letter code: MQREKDSLIVVSGGMDSVTLMYEKRASIALALSFDYGSKHNARELSFARLHAERLGVEHLIIPLDFIGQYFQSDLLLSGGDIPEGRYDEENMKSTVVPFRNGIMLAVAAGLAESRGLRRIYIANHFGDHAIYPDCRASFIRPMTEAVRCGTTNGVLIEAPYTDITKTDIARIGASLGIDYAETWSCYKGGVFHCGVCGTCVERKEALHDAGIPDPTEYEG.

ATP is bound at residue 11 to 21 (VSGGMDSVTLM). Zn(2+) contacts are provided by cysteine 186, cysteine 194, cysteine 197, and cysteine 200.

The protein belongs to the QueC family. It depends on Zn(2+) as a cofactor.

The enzyme catalyses 7-carboxy-7-deazaguanine + NH4(+) + ATP = 7-cyano-7-deazaguanine + ADP + phosphate + H2O + H(+). Its pathway is purine metabolism; 7-cyano-7-deazaguanine biosynthesis. Its function is as follows. Catalyzes the ATP-dependent conversion of 7-carboxy-7-deazaguanine (CDG) to 7-cyano-7-deazaguanine (preQ(0)). The chain is 7-cyano-7-deazaguanine synthase from Porphyromonas gingivalis (strain ATCC 33277 / DSM 20709 / CIP 103683 / JCM 12257 / NCTC 11834 / 2561).